The following is a 318-amino-acid chain: Probable cell division protein WhiA (318 aa).

Positions 281–314 (SLKELGEMLSPPVGKSGVNHRLRRIEKIAEELSK) form a DNA-binding region, H-T-H motif.

It belongs to the WhiA family.

Involved in cell division and chromosome segregation. The chain is Probable cell division protein WhiA from Clostridium tetani (strain Massachusetts / E88).